A 504-amino-acid chain; its full sequence is Anaerobic nitric oxide reductase transcription regulator NorR (504 aa).

The residue at position 57 (D57) is a 4-aspartylphosphate. The region spanning 187–416 (MIGLSPGMTQ…LEHAIHRAVV (230 aa)) is the Sigma-54 factor interaction domain. ATP-binding positions include 215-222 (GETGTGKE) and 278-287 (ADNGTLFLDE). The H-T-H motif DNA-binding region spans 479 to 498 (WAACARMLETDVANLHRLAK).

Its pathway is nitrogen metabolism; nitric oxide reduction. Required for the expression of anaerobic nitric oxide (NO) reductase, acts as a transcriptional activator for at least the norVW operon. Activation also requires sigma-54. The polypeptide is Anaerobic nitric oxide reductase transcription regulator NorR (Escherichia coli O127:H6 (strain E2348/69 / EPEC)).